The chain runs to 249 residues: Chromosome-partitioning ATPase Soj (249 aa).

Positions 15, 16, 17, 18, 19, 20, 21, 22, 207, and 209 each coordinate ATP. Position 17 (Gly17) interacts with ADP. ADP is bound by residues Gly19, Lys20, Thr21, Thr22, Pro207, and Asn209. A Mg(2+)-binding site is contributed by Thr21.

This sequence belongs to the ParA family. As to quaternary structure, monomer in the absence of nucleotides or presence of ADP, in the presence of ATP is found in a monomer-dimer equilibrium. ATP-binding is required for DNA-binding. Probably interacts with Spo0J.

The catalysed reaction is ATP + H2O = ADP + phosphate + H(+). Its activity is regulated as follows. ATPase activity is stimulated 10-fold in the presence of Spo0J and parS DNA (a plasmid centromere-like site or plasmid DNA itself). The first 20 residues of Spo0J stimulate its ATPase activity by 8%. In terms of biological role, ATPase probably involved in chromosome partitioning. Cooperatively binds dsDNA, forming nucleoprotein filaments in a strictly ATP-dependent fashion. Can also bind ssDNA with lower affinity. This chain is Chromosome-partitioning ATPase Soj, found in Thermus thermophilus (strain ATCC BAA-163 / DSM 7039 / HB27).